The primary structure comprises 285 residues: Bifunctional protein FolD (285 aa).

Residues 165–167 (GRS) and S190 each bind NADP(+).

Belongs to the tetrahydrofolate dehydrogenase/cyclohydrolase family. In terms of assembly, homodimer.

It catalyses the reaction (6R)-5,10-methylene-5,6,7,8-tetrahydrofolate + NADP(+) = (6R)-5,10-methenyltetrahydrofolate + NADPH. The enzyme catalyses (6R)-5,10-methenyltetrahydrofolate + H2O = (6R)-10-formyltetrahydrofolate + H(+). It participates in one-carbon metabolism; tetrahydrofolate interconversion. In terms of biological role, catalyzes the oxidation of 5,10-methylenetetrahydrofolate to 5,10-methenyltetrahydrofolate and then the hydrolysis of 5,10-methenyltetrahydrofolate to 10-formyltetrahydrofolate. The chain is Bifunctional protein FolD from Ligilactobacillus salivarius (strain UCC118) (Lactobacillus salivarius).